Reading from the N-terminus, the 36-residue chain is Fructose-1,6-/sedoheptulose-1,7-bisphosphate aldolase (36 aa).

The protein is Fructose-1,6-/sedoheptulose-1,7-bisphosphate aldolase (cbbA) of Nitrobacter vulgaris.